A 906-amino-acid chain; its full sequence is Cadherin-2 (906 aa).

An N-terminal signal peptide occupies residues 1–25; it reads MCRIVGAPRTLLPLLAALLQASVDA. The propeptide occupies 26–159; it reads SGEISLCKTG…HNGYLQRQKR (134 aa). S96 and S135 each carry phosphoserine. Cadherin domains lie at 160 to 267, 268 to 392, 393 to 497, 498 to 603, and 604 to 714; these read DWVI…RPEF, LHQV…GEVP, ENRV…NPYF, APNP…DNAP, and QVLP…DVDR. The Extracellular segment spans residues 160–724; it reads DWVIPPINLP…IVGAGLGTGA (565 aa). E170 is a Ca(2+) binding site. N-linked (GlcNAc...) asparagine glycosylation is present at N190. Ca(2+)-binding residues include D226, E228, D259, M260, N261, D262, and N263. N273 carries an N-linked (GlcNAc...) asparagine glycan. Ca(2+) contacts are provided by D293, D295, and N301. A glycan (N-linked (GlcNAc...) asparagine) is linked at N325. Residue D353 coordinates Ca(2+). 6 N-linked (GlcNAc...) asparagine glycosylation sites follow: N357, N402, N572, N622, N651, and N692. Residues 725-746 form a helical membrane-spanning segment; it reads IIAILLCIIILLILVLMFVVWM. Topologically, residues 747–906 are cytoplasmic; that stretch reads KRRDKERQAK…LADMYGGGDD (160 aa). A compositionally biased stretch (low complexity) spans 863–880; the sequence is SGSTAGSLSSLNSSSSGG. A disordered region spans residues 863–884; it reads SGSTAGSLSSLNSSSSGGEQDY.

Homodimer (via extracellular region). Can also form heterodimers with other cadherins (via extracellular region). Dimerization occurs in trans, i.e. with a cadherin chain from another cell. Interacts with CDCP1. Interacts with PCDH8; this complex may also include TAOK2. The interaction with PCDH8 may lead to internalization through TAOK2/p38 MAPK pathway. Identified in a complex containing FGFR4, NCAM1, CDH2, PLCG1, FRS2, SRC, SHC1, GAP43 and CTTN. May interact with OBSCN (via protein kinase domain 2). Interacts with FBXO45. In terms of processing, cleaved by MMP24. Ectodomain cleavage leads to the generation of a soluble 90 kDa N-terminal soluble fragment and a 45 kDa membrane-bound C-terminal fragment 1 (CTF1), which is further cleaved by gamma-secretase into a 35 kDa. Cleavage in neural stem cells by MMP24 affects CDH2-mediated anchorage of neural stem cells to ependymocytes in the adult subependymal zone, leading to modulate neural stem cell quiescence. May be phosphorylated by OBSCN. As to expression, detected in liver, kidney, heart and brain capillaries.

The protein localises to the cell membrane. It is found in the sarcolemma. The protein resides in the cell junction. It localises to the cell surface. Its subcellular location is the desmosome. The protein localises to the adherens junction. Calcium-dependent cell adhesion protein; preferentially mediates homotypic cell-cell adhesion by dimerization with a CDH2 chain from another cell. Cadherins may thus contribute to the sorting of heterogeneous cell types. Acts as a regulator of neural stem cells quiescence by mediating anchorage of neural stem cells to ependymocytes in the adult subependymal zone: upon cleavage by MMP24, CDH2-mediated anchorage is affected, leading to modulate neural stem cell quiescence. Plays a role in cell-to-cell junction formation between pancreatic beta cells and neural crest stem (NCS) cells, promoting the formation of processes by NCS cells. Required for proper neurite branching. Required for pre- and postsynaptic organization. CDH2 may be involved in neuronal recognition mechanism. In hippocampal neurons, may regulate dendritic spine density. The protein is Cadherin-2 (CDH2) of Bos taurus (Bovine).